A 117-amino-acid polypeptide reads, in one-letter code: Large ribosomal subunit protein uL18 (117 aa).

It belongs to the universal ribosomal protein uL18 family. Part of the 50S ribosomal subunit; part of the 5S rRNA/L5/L18/L25 subcomplex. Contacts the 5S and 23S rRNAs.

Functionally, this is one of the proteins that bind and probably mediate the attachment of the 5S RNA into the large ribosomal subunit, where it forms part of the central protuberance. This Pseudoalteromonas atlantica (strain T6c / ATCC BAA-1087) protein is Large ribosomal subunit protein uL18.